Here is a 415-residue protein sequence, read N- to C-terminus: Adenylosuccinate synthetase (415 aa).

GTP is bound by residues 12–18 (GDEGKGK) and 40–42 (GHT). The Proton acceptor role is filled by Asp-13. Mg(2+) is bound by residues Asp-13 and Gly-40. IMP contacts are provided by residues 13 to 16 (DEGK), 38 to 41 (NAGH), Thr-125, Arg-139, Gln-219, Thr-234, and Arg-298. His-41 functions as the Proton donor in the catalytic mechanism. 294 to 300 (TTTGRPR) provides a ligand contact to substrate. Residues Arg-300, 326–328 (KLD), and 404–406 (STG) contribute to the GTP site.

This sequence belongs to the adenylosuccinate synthetase family. In terms of assembly, homodimer. It depends on Mg(2+) as a cofactor.

It localises to the cytoplasm. It catalyses the reaction IMP + L-aspartate + GTP = N(6)-(1,2-dicarboxyethyl)-AMP + GDP + phosphate + 2 H(+). Its pathway is purine metabolism; AMP biosynthesis via de novo pathway; AMP from IMP: step 1/2. In terms of biological role, plays an important role in the de novo pathway of purine nucleotide biosynthesis. Catalyzes the first committed step in the biosynthesis of AMP from IMP. This Wolinella succinogenes (strain ATCC 29543 / DSM 1740 / CCUG 13145 / JCM 31913 / LMG 7466 / NCTC 11488 / FDC 602W) (Vibrio succinogenes) protein is Adenylosuccinate synthetase.